Reading from the N-terminus, the 165-residue chain is Natriuretic peptide Na-NP (165 aa).

An N-terminal signal peptide occupies residues 1 to 25; it reads MVGLSRLAGGGLLLVLALLPLALDG. A propeptide spanning residues 26-83 is cleaved from the precursor; it reads KPAPEALHKPPTGLRTSLAALRILGYLRPDSKQSRAARDRMLHPEQQVGGGGDSRPLQ. Residues 56 to 68 show a composition bias toward basic and acidic residues; it reads SKQSRAARDRMLH. Disordered stretches follow at residues 56–100 and 135–165; these read SKQS…QKID and PDSKRSRATRDRMLHPEQQVGGGGGGGSRVI. A disulfide bond links Cys-94 and Cys-110. The propeptide occupies 129–165; that stretch reads ILEYLRPDSKRSRATRDRMLHPEQQVGGGGGGGSRVI. Residues 135–149 show a composition bias toward basic and acidic residues; it reads PDSKRSRATRDRMLH. Gly residues predominate over residues 154–165; sequence VGGGGGGGSRVI.

Belongs to the natriuretic peptide family. Expressed by the venom gland.

The protein resides in the secreted. Natriuretic peptide that dose-dependently induces the rapid relaxation of rat aortic strips phenylephrine-precontracted. Acts by stimulating cGMP production in a dose-dependent manner (by probably activating NPR1 and/or NPR2). May also show potent hypotensive effects. The protein is Natriuretic peptide Na-NP of Naja atra (Chinese cobra).